The chain runs to 251 residues: Hydroxyacylglutathione hydrolase (251 aa).

7 residues coordinate Zn(2+): H53, H55, D57, H58, H110, D127, and H165.

Belongs to the metallo-beta-lactamase superfamily. Glyoxalase II family. Monomer. Requires Zn(2+) as cofactor.

The catalysed reaction is an S-(2-hydroxyacyl)glutathione + H2O = a 2-hydroxy carboxylate + glutathione + H(+). Its pathway is secondary metabolite metabolism; methylglyoxal degradation; (R)-lactate from methylglyoxal: step 2/2. In terms of biological role, thiolesterase that catalyzes the hydrolysis of S-D-lactoyl-glutathione to form glutathione and D-lactic acid. This Buchnera aphidicola subsp. Acyrthosiphon pisum (strain APS) (Acyrthosiphon pisum symbiotic bacterium) protein is Hydroxyacylglutathione hydrolase.